Here is a 172-residue protein sequence, read N- to C-terminus: VQ motif-containing protein 17 (172 aa).

The VQ motif lies at 51 to 60 (FREIVQNLTG). The tract at residues 60–97 (GKQDHHHHDLPHQKGLKRNPRSRRSHDHHEVHDMNKSH) is disordered. The span at 61–71 (KQDHHHHDLPH) shows a compositional bias: basic and acidic residues. Residues 72-85 (QKGLKRNPRSRRSH) show a composition bias toward basic residues. Over residues 86-95 (DHHEVHDMNK) the composition is skewed to basic and acidic residues.

Its subcellular location is the nucleus. May function as positive regulator of plant growth. This Arabidopsis thaliana (Mouse-ear cress) protein is VQ motif-containing protein 17.